A 103-amino-acid chain; its full sequence is Small ribosomal subunit protein uS10 (103 aa).

The tract at residues 35–59 (LSGPVPLPTKTLEVPSRKSPDGEGT) is disordered.

It belongs to the universal ribosomal protein uS10 family. As to quaternary structure, part of the 30S ribosomal subunit.

Involved in the binding of tRNA to the ribosomes. This Haloarcula marismortui (strain ATCC 43049 / DSM 3752 / JCM 8966 / VKM B-1809) (Halobacterium marismortui) protein is Small ribosomal subunit protein uS10 (rps10).